Reading from the N-terminus, the 87-residue chain is UPF0250 protein YbeD (87 aa).

The protein belongs to the UPF0250 family.

The polypeptide is UPF0250 protein YbeD (Shigella boydii serotype 18 (strain CDC 3083-94 / BS512)).